We begin with the raw amino-acid sequence, 392 residues long: Chaperone protein DnaJ 1 (392 aa).

The J domain occupies 4–67 (DYYEILGVSH…QKRAVFDRGG (64 aa)). The CR-type zinc-finger motif lies at 134–216 (GVTKSLEVDT…CSGEGRVRTT (83 aa)). 8 residues coordinate Zn(2+): Cys-147, Cys-150, Cys-164, Cys-167, Cys-190, Cys-193, Cys-204, and Cys-207. 4 CXXCXGXG motif repeats span residues 147–154 (CPKCQGKG), 164–171 (CDTCQGRG), 190–197 (CPTCHGYG), and 204–211 (CQECSGEG). A disordered region spans residues 367-392 (ETNASASVEKSGGRGMFSRIKEAFGG).

This sequence belongs to the DnaJ family. As to quaternary structure, homodimer. Requires Zn(2+) as cofactor.

It is found in the cytoplasm. In terms of biological role, participates actively in the response to hyperosmotic and heat shock by preventing the aggregation of stress-denatured proteins and by disaggregating proteins, also in an autonomous, DnaK-independent fashion. Unfolded proteins bind initially to DnaJ; upon interaction with the DnaJ-bound protein, DnaK hydrolyzes its bound ATP, resulting in the formation of a stable complex. GrpE releases ADP from DnaK; ATP binding to DnaK triggers the release of the substrate protein, thus completing the reaction cycle. Several rounds of ATP-dependent interactions between DnaJ, DnaK and GrpE are required for fully efficient folding. Also involved, together with DnaK and GrpE, in the DNA replication of plasmids through activation of initiation proteins. The protein is Chaperone protein DnaJ 1 of Cutibacterium acnes (strain DSM 16379 / KPA171202) (Propionibacterium acnes).